A 431-amino-acid polypeptide reads, in one-letter code: Selenocysteine lyase (431 aa).

Lys239 carries the post-translational modification N6-(pyridoxal phosphate)lysine. Cys367 functions as the S-selanylcysteine intermediate in the catalytic mechanism.

The protein belongs to the class-V pyridoxal-phosphate-dependent aminotransferase family. In terms of assembly, homodimer. Pyridoxal 5'-phosphate serves as cofactor.

It localises to the cytoplasm. It is found in the cytosol. It catalyses the reaction L-selenocysteine + AH2 = hydrogenselenide + L-alanine + A + H(+). Functionally, catalyzes the decomposition of L-selenocysteine to L-alanine and elemental selenium. The polypeptide is Selenocysteine lyase (scly) (Xenopus tropicalis (Western clawed frog)).